The sequence spans 393 residues: Ethanol acetyltransferase 1 (393 aa).

The transit peptide at 1 to 25 (MHFTRTLFNQVASKASRQLPVQKRV) directs the protein to the mitochondrion. In terms of domain architecture, AB hydrolase-1 spans 49–151 (PIVFVHGIFG…GVIIDNSPIE (103 aa)). Residues Ser122, Asp146, and His296 each act as charge relay system in the active site. Residues 343-354 (AKHAQQIEELRK) show a composition bias toward basic and acidic residues. Positions 343–393 (AKHAQQIEELRKVTSTSESSIPHSTQSSEQAFTENIDLARQEREHQKSVSA) are disordered. Residues 355–375 (VTSTSESSIPHSTQSSEQAFT) show a composition bias toward polar residues. Residues 379-393 (DLARQEREHQKSVSA) show a composition bias toward basic and acidic residues.

It belongs to the AB hydrolase superfamily.

Its subcellular location is the mitochondrion. It catalyses the reaction ethanol + acetyl-CoA = ethyl acetate + CoA. The catalysed reaction is acetyl-CoA + H2O = acetate + CoA + H(+). It carries out the reaction ethyl acetate + H2O = ethanol + acetate + H(+). Alcohol acetyltransferase that catalyzes the synthesis of ethyl acetate from ethanol and acetyl-CoA. Can also function as a thioesterase by hydrolyzing acetyl-CoA in the absence of ethanol, as well as esterase hydrolyzing ethyl acetate. This is Ethanol acetyltransferase 1 (EAT1) from Wickerhamomyces ciferrii (strain ATCC 14091 / BCRC 22168 / CBS 111 / JCM 3599 / NBRC 0793 / NRRL Y-1031 F-60-10) (Yeast).